The sequence spans 463 residues: tRNA-2-methylthio-N(6)-dimethylallyladenosine synthase (463 aa).

The MTTase N-terminal domain maps to 19–135 (RSYWITTFGC…LENLLGKVDL (117 aa)). 6 residues coordinate [4Fe-4S] cluster: Cys28, Cys64, Cys98, Cys170, Cys174, and Cys177. Residues 156 to 393 (RESSICGWVN…NALVEKTARN (238 aa)) enclose the Radical SAM core domain. The TRAM domain maps to 396-463 (QRYINNIESV…RPFSLTGELC (68 aa)).

Belongs to the methylthiotransferase family. MiaB subfamily. In terms of assembly, monomer. [4Fe-4S] cluster serves as cofactor.

The protein localises to the cytoplasm. It catalyses the reaction N(6)-dimethylallyladenosine(37) in tRNA + (sulfur carrier)-SH + AH2 + 2 S-adenosyl-L-methionine = 2-methylsulfanyl-N(6)-dimethylallyladenosine(37) in tRNA + (sulfur carrier)-H + 5'-deoxyadenosine + L-methionine + A + S-adenosyl-L-homocysteine + 2 H(+). Its function is as follows. Catalyzes the methylthiolation of N6-(dimethylallyl)adenosine (i(6)A), leading to the formation of 2-methylthio-N6-(dimethylallyl)adenosine (ms(2)i(6)A) at position 37 in tRNAs that read codons beginning with uridine. This is tRNA-2-methylthio-N(6)-dimethylallyladenosine synthase from Prochlorococcus marinus (strain MIT 9312).